The following is a 343-amino-acid chain: S-adenosylmethionine:tRNA ribosyltransferase-isomerase (343 aa).

It belongs to the QueA family. Monomer.

The protein resides in the cytoplasm. It catalyses the reaction 7-aminomethyl-7-carbaguanosine(34) in tRNA + S-adenosyl-L-methionine = epoxyqueuosine(34) in tRNA + adenine + L-methionine + 2 H(+). The protein operates within tRNA modification; tRNA-queuosine biosynthesis. Functionally, transfers and isomerizes the ribose moiety from AdoMet to the 7-aminomethyl group of 7-deazaguanine (preQ1-tRNA) to give epoxyqueuosine (oQ-tRNA). In Dehalococcoides mccartyi (strain ATCC BAA-2100 / JCM 16839 / KCTC 5957 / BAV1), this protein is S-adenosylmethionine:tRNA ribosyltransferase-isomerase.